A 340-amino-acid polypeptide reads, in one-letter code: Glycerol-3-phosphate dehydrogenase [NAD(P)+] (340 aa).

NADPH contacts are provided by Ser11, Trp12, Arg33, and Lys106. Sn-glycerol 3-phosphate contacts are provided by Lys106, Gly137, and Ser139. Position 141 (Ala141) interacts with NADPH. Sn-glycerol 3-phosphate-binding residues include Lys192, Asp245, Ser255, Arg256, and Asn257. Catalysis depends on Lys192, which acts as the Proton acceptor. An NADPH-binding site is contributed by Arg256. 2 residues coordinate NADPH: Val280 and Glu282.

This sequence belongs to the NAD-dependent glycerol-3-phosphate dehydrogenase family.

Its subcellular location is the cytoplasm. It catalyses the reaction sn-glycerol 3-phosphate + NAD(+) = dihydroxyacetone phosphate + NADH + H(+). The enzyme catalyses sn-glycerol 3-phosphate + NADP(+) = dihydroxyacetone phosphate + NADPH + H(+). The protein operates within membrane lipid metabolism; glycerophospholipid metabolism. Its function is as follows. Catalyzes the reduction of the glycolytic intermediate dihydroxyacetone phosphate (DHAP) to sn-glycerol 3-phosphate (G3P), the key precursor for phospholipid synthesis. The chain is Glycerol-3-phosphate dehydrogenase [NAD(P)+] from Bacillus cereus (strain 03BB102).